The chain runs to 968 residues: RNA polymerase-associated protein RapA (968 aa).

A Helicase ATP-binding domain is found at 164-334; sequence DVGRRHAPRV…FARLRLLDPN (171 aa). 177–184 provides a ligand contact to ATP; that stretch reads DEVGLGKT. The short motif at 280–283 is the DEAH box element; the sequence is DEAH. A Helicase C-terminal domain is found at 490–662; the sequence is RVEWLMGYLT…YLASPDQTEG (173 aa).

The protein belongs to the SNF2/RAD54 helicase family. RapA subfamily. As to quaternary structure, interacts with the RNAP. Has a higher affinity for the core RNAP than for the holoenzyme. Its ATPase activity is stimulated by binding to RNAP.

Transcription regulator that activates transcription by stimulating RNA polymerase (RNAP) recycling in case of stress conditions such as supercoiled DNA or high salt concentrations. Probably acts by releasing the RNAP, when it is trapped or immobilized on tightly supercoiled DNA. Does not activate transcription on linear DNA. Probably not involved in DNA repair. The protein is RNA polymerase-associated protein RapA of Escherichia coli O9:H4 (strain HS).